The following is a 337-amino-acid chain: Glyceraldehyde-3-phosphate dehydrogenase (337 aa).

Residues Arg12–Ile13, Asp34, and Arg79 each bind NAD(+). D-glyceraldehyde 3-phosphate contacts are provided by residues Ser150–Thr152, Thr181, Thr210–Gly211, and Arg233. The active-site Nucleophile is the Cys151. NAD(+) is bound at residue Asn315.

It belongs to the glyceraldehyde-3-phosphate dehydrogenase family. As to quaternary structure, homotetramer.

The protein localises to the cytoplasm. The catalysed reaction is D-glyceraldehyde 3-phosphate + phosphate + NAD(+) = (2R)-3-phospho-glyceroyl phosphate + NADH + H(+). It participates in carbohydrate degradation; glycolysis; pyruvate from D-glyceraldehyde 3-phosphate: step 1/5. This is Glyceraldehyde-3-phosphate dehydrogenase from Cryphonectria parasitica (Chestnut blight fungus).